We begin with the raw amino-acid sequence, 122 residues long: Aspartate 1-decarboxylase (122 aa).

Serine 25 (schiff-base intermediate with substrate; via pyruvic acid) is an active-site residue. Serine 25 carries the post-translational modification Pyruvic acid (Ser). Threonine 57 is a binding site for substrate. Catalysis depends on tyrosine 58, which acts as the Proton donor. 73–75 (GAA) contacts substrate.

Belongs to the PanD family. In terms of assembly, heterooctamer of four alpha and four beta subunits. Requires pyruvate as cofactor. In terms of processing, is synthesized initially as an inactive proenzyme, which is activated by self-cleavage at a specific serine bond to produce a beta-subunit with a hydroxyl group at its C-terminus and an alpha-subunit with a pyruvoyl group at its N-terminus.

Its subcellular location is the cytoplasm. It catalyses the reaction L-aspartate + H(+) = beta-alanine + CO2. The protein operates within cofactor biosynthesis; (R)-pantothenate biosynthesis; beta-alanine from L-aspartate: step 1/1. Catalyzes the pyruvoyl-dependent decarboxylation of aspartate to produce beta-alanine. The protein is Aspartate 1-decarboxylase of Bordetella pertussis (strain Tohama I / ATCC BAA-589 / NCTC 13251).